The following is a 248-amino-acid chain: Probable transcriptional regulatory protein Psyr_1407 (248 aa).

This sequence belongs to the TACO1 family.

Its subcellular location is the cytoplasm. The protein is Probable transcriptional regulatory protein Psyr_1407 of Pseudomonas syringae pv. syringae (strain B728a).